The following is a 229-amino-acid chain: Thiamine import ATP-binding protein ThiQ (229 aa).

One can recognise an ABC transporter domain in the interval 2–229; it reads LHLENIRVRQ…NNAEPLRPWM (228 aa). 32–39 serves as a coordination point for ATP; the sequence is GASGSGKS.

It belongs to the ABC transporter superfamily. Thiamine importer (TC 3.A.1.19.1) family. As to quaternary structure, the complex is composed of two ATP-binding proteins (ThiQ), two transmembrane proteins (ThiP) and a solute-binding protein (ThiB).

The protein localises to the cell inner membrane. It catalyses the reaction thiamine(out) + ATP + H2O = thiamine(in) + ADP + phosphate + H(+). Functionally, part of the ABC transporter complex ThiBPQ involved in thiamine import. Responsible for energy coupling to the transport system. In Jannaschia sp. (strain CCS1), this protein is Thiamine import ATP-binding protein ThiQ.